Consider the following 294-residue polypeptide: NAD kinase (294 aa).

The Proton acceptor role is filled by D73. NAD(+) is bound by residues 73–74, 147–148, R175, D177, and 188–193; these read DG, ND, and TAYALS.

Belongs to the NAD kinase family. The cofactor is a divalent metal cation.

It localises to the cytoplasm. The enzyme catalyses NAD(+) + ATP = ADP + NADP(+) + H(+). Functionally, involved in the regulation of the intracellular balance of NAD and NADP, and is a key enzyme in the biosynthesis of NADP. Catalyzes specifically the phosphorylation on 2'-hydroxyl of the adenosine moiety of NAD to yield NADP. This chain is NAD kinase, found in Nitrosospira multiformis (strain ATCC 25196 / NCIMB 11849 / C 71).